The following is a 315-amino-acid chain: Small ribosomal subunit biogenesis GTPase RsgA (315 aa).

The 165-residue stretch at 79–243 (LSKESHILGA…LIDTPGIKGF (165 aa)) folds into the CP-type G domain. Residues 128 to 131 (NKID) and 182 to 190 (GHSGVGKSS) each bind GTP. Zn(2+)-binding residues include cysteine 267, cysteine 272, histidine 274, and cysteine 280.

It belongs to the TRAFAC class YlqF/YawG GTPase family. RsgA subfamily. Monomer. Associates with 30S ribosomal subunit, binds 16S rRNA. Zn(2+) serves as cofactor.

It localises to the cytoplasm. Functionally, one of several proteins that assist in the late maturation steps of the functional core of the 30S ribosomal subunit. Helps release RbfA from mature subunits. May play a role in the assembly of ribosomal proteins into the subunit. Circularly permuted GTPase that catalyzes slow GTP hydrolysis, GTPase activity is stimulated by the 30S ribosomal subunit. In Porphyromonas gingivalis (strain ATCC 33277 / DSM 20709 / CIP 103683 / JCM 12257 / NCTC 11834 / 2561), this protein is Small ribosomal subunit biogenesis GTPase RsgA.